Here is a 167-residue protein sequence, read N- to C-terminus: NAD(P)H-quinone oxidoreductase subunit I, chloroplastic (167 aa).

4Fe-4S ferredoxin-type domains are found at residues 55–84 (GRIH…VDWK) and 95–124 (LNYS…MTEE). 8 residues coordinate [4Fe-4S] cluster: cysteine 64, cysteine 67, cysteine 70, cysteine 74, cysteine 104, cysteine 107, cysteine 110, and cysteine 114.

It belongs to the complex I 23 kDa subunit family. As to quaternary structure, NDH is composed of at least 16 different subunits, 5 of which are encoded in the nucleus. [4Fe-4S] cluster serves as cofactor.

Its subcellular location is the plastid. It localises to the chloroplast thylakoid membrane. The catalysed reaction is a plastoquinone + NADH + (n+1) H(+)(in) = a plastoquinol + NAD(+) + n H(+)(out). The enzyme catalyses a plastoquinone + NADPH + (n+1) H(+)(in) = a plastoquinol + NADP(+) + n H(+)(out). Its function is as follows. NDH shuttles electrons from NAD(P)H:plastoquinone, via FMN and iron-sulfur (Fe-S) centers, to quinones in the photosynthetic chain and possibly in a chloroplast respiratory chain. The immediate electron acceptor for the enzyme in this species is believed to be plastoquinone. Couples the redox reaction to proton translocation, and thus conserves the redox energy in a proton gradient. This is NAD(P)H-quinone oxidoreductase subunit I, chloroplastic from Lepidium virginicum (Virginia pepperweed).